A 550-amino-acid chain; its full sequence is Hydroxylamine reductase (550 aa).

[2Fe-2S] cluster contacts are provided by Cys3, Cys6, Cys18, and Cys25. The hybrid [4Fe-2O-2S] cluster site is built by His249, Glu273, Cys317, Cys405, Cys433, Cys458, Glu492, and Lys494. At Cys405 the chain carries Cysteine persulfide.

Belongs to the HCP family. The cofactor is [2Fe-2S] cluster. Requires hybrid [4Fe-2O-2S] cluster as cofactor.

The protein resides in the cytoplasm. It carries out the reaction A + NH4(+) + H2O = hydroxylamine + AH2 + H(+). Functionally, catalyzes the reduction of hydroxylamine to form NH(3) and H(2)O. This Yersinia pseudotuberculosis serotype O:1b (strain IP 31758) protein is Hydroxylamine reductase.